The primary structure comprises 637 residues: Anthranilate synthase, phenazine specific (637 aa).

Residues 1-434 (MSQAAARLME…QRQQTQSDFS (434 aa)) form an anthranilate synthase component I region. The Glutamine amidotransferase type-1 domain maps to 437-628 (QVLIVDAEDT…LRHALIHTPV (192 aa)). Active-site for GATase activity residues include Cys-517, His-602, and Glu-604.

It carries out the reaction chorismate + L-glutamine = anthranilate + pyruvate + L-glutamate + H(+). Its pathway is antibiotic biosynthesis; phenazine biosynthesis. Its function is as follows. Involved in the biosynthesis of the antibiotic, phenazine, a nitrogen-containing heterocyclic molecule having important roles in virulence, competition and biological control. This chain is Anthranilate synthase, phenazine specific (phzE), found in Pseudomonas fluorescens.